A 292-amino-acid polypeptide reads, in one-letter code: Elongation factor Ts (292 aa).

The tract at residues 79 to 82 (TDFV) is involved in Mg(2+) ion dislocation from EF-Tu.

It belongs to the EF-Ts family.

It is found in the cytoplasm. In terms of biological role, associates with the EF-Tu.GDP complex and induces the exchange of GDP to GTP. It remains bound to the aminoacyl-tRNA.EF-Tu.GTP complex up to the GTP hydrolysis stage on the ribosome. The chain is Elongation factor Ts from Metamycoplasma arthritidis (strain 158L3-1) (Mycoplasma arthritidis).